We begin with the raw amino-acid sequence, 503 residues long: Lysine--tRNA ligase (503 aa).

The Mg(2+) site is built by Glu-414 and Glu-421.

It belongs to the class-II aminoacyl-tRNA synthetase family. As to quaternary structure, homodimer. It depends on Mg(2+) as a cofactor.

It is found in the cytoplasm. It carries out the reaction tRNA(Lys) + L-lysine + ATP = L-lysyl-tRNA(Lys) + AMP + diphosphate. The polypeptide is Lysine--tRNA ligase (Neisseria meningitidis serogroup B (strain ATCC BAA-335 / MC58)).